The chain runs to 245 residues: Thiamine phosphate phosphatase-like protein (245 aa).

Aspartate 9 acts as the Nucleophile in catalysis. Mg(2+) contacts are provided by aspartate 9, aspartate 11, and aspartate 179. Aspartate 11 acts as the Proton donor in catalysis.

It belongs to the HAD-like hydrolase superfamily. As to quaternary structure, monomer. Mg(2+) serves as cofactor.

The enzyme catalyses thiamine phosphate + H2O = thiamine + phosphate. Functionally, HAD-like hydrolase that has a thiamine monophosphate phosphatase activity in a heterologous system. Does not contribute to thiamine monophosphate phosphatase activity in planta. The polypeptide is Thiamine phosphate phosphatase-like protein (Arabidopsis thaliana (Mouse-ear cress)).